The primary structure comprises 310 residues: Porphobilinogen deaminase (310 aa).

C242 bears the S-(dipyrrolylmethanemethyl)cysteine mark.

This sequence belongs to the HMBS family. Monomer. Dipyrromethane serves as cofactor.

It carries out the reaction 4 porphobilinogen + H2O = hydroxymethylbilane + 4 NH4(+). The protein operates within porphyrin-containing compound metabolism; protoporphyrin-IX biosynthesis; coproporphyrinogen-III from 5-aminolevulinate: step 2/4. Functionally, tetrapolymerization of the monopyrrole PBG into the hydroxymethylbilane pre-uroporphyrinogen in several discrete steps. This chain is Porphobilinogen deaminase, found in Shewanella sp. (strain W3-18-1).